We begin with the raw amino-acid sequence, 259 residues long: Pimeloyl-[acyl-carrier protein] methyl ester esterase (259 aa).

One can recognise an AB hydrolase-1 domain in the interval 16-241; sequence FVMLHGWGMN…QSAHVPFISH (226 aa). Substrate contacts are provided by residues W22, 82–83, and 143–147; these read SM and FLLLQ. S82 functions as the Nucleophile in the catalytic mechanism. Active-site residues include D207 and H235. H235 lines the substrate pocket.

This sequence belongs to the AB hydrolase superfamily. Carboxylesterase BioH family. As to quaternary structure, monomer.

Its subcellular location is the cytoplasm. It catalyses the reaction 6-carboxyhexanoyl-[ACP] methyl ester + H2O = 6-carboxyhexanoyl-[ACP] + methanol + H(+). It participates in cofactor biosynthesis; biotin biosynthesis. The physiological role of BioH is to remove the methyl group introduced by BioC when the pimeloyl moiety is complete. It allows to synthesize pimeloyl-ACP via the fatty acid synthetic pathway through the hydrolysis of the ester bonds of pimeloyl-ACP esters. This is Pimeloyl-[acyl-carrier protein] methyl ester esterase from Hamiltonella defensa subsp. Acyrthosiphon pisum (strain 5AT).